The sequence spans 416 residues: Formyl-CoA:oxalate CoA-transferase (416 aa).

CoA is bound by residues 17–18, Arg-38, 72–75, 96–98, His-104, and 137–140; these read QS, LNTK, NFH, and KAYE. Asp-169 acts as the Nucleophile in catalysis. 248–250 contacts substrate; it reads GGQ. 273–275 provides a ligand contact to CoA; the sequence is QEQ.

This sequence belongs to the CoA-transferase III family. Frc subfamily. As to quaternary structure, homodimer.

The enzyme catalyses formyl-CoA + oxalate = oxalyl-CoA + formate. Its pathway is metabolic intermediate degradation; oxalate degradation; CO(2) and formate from oxalate: step 1/2. Its function is as follows. Involved in the catabolism of oxalate and in the adapatation to low pH via the induction of the oxalate-dependent acid tolerance response (ATR). Catalyzes the transfer of the CoA moiety from formyl-CoA to oxalate. In Escherichia coli O17:K52:H18 (strain UMN026 / ExPEC), this protein is Formyl-CoA:oxalate CoA-transferase.